Here is a 683-residue protein sequence, read N- to C-terminus: Leucine zipper putative tumor suppressor 2 homolog (683 aa).

Disordered regions lie at residues 1–37, 82–107, and 262–320; these read MAAL…TMGS, YSSQ…NNGN, and MGHI…CDRS. Composition is skewed to polar residues over residues 11–37 and 96–107; these read IDQN…TMGS and KPSTTTSGNNGN. The segment covering 290–308 has biased composition (low complexity); the sequence is SDSGRSSSSKSTGSLSGRG. The stretch at 324 to 665 forms a coiled coil; the sequence is SDEILIRELE…LELEARELDE (342 aa).

The protein belongs to the LZTS2 family.

It localises to the cytoplasm. The protein localises to the cytoskeleton. It is found in the microtubule organizing center. The protein resides in the centrosome. In terms of biological role, negative regulator of katanin-mediated microtubule severing and release from the centrosome. Required for central spindle formation and the completion of cytokinesis. Negative regulator of the Wnt signaling pathway. Represses beta-catenin-mediated transcriptional activation by promoting the nuclear exclusion of beta-catenin. The chain is Leucine zipper putative tumor suppressor 2 homolog (lzts2) from Xenopus tropicalis (Western clawed frog).